Consider the following 308-residue polypeptide: Ribosomal RNA large subunit methyltransferase F (308 aa).

Belongs to the methyltransferase superfamily. METTL16/RlmF family.

It localises to the cytoplasm. It carries out the reaction adenosine(1618) in 23S rRNA + S-adenosyl-L-methionine = N(6)-methyladenosine(1618) in 23S rRNA + S-adenosyl-L-homocysteine + H(+). Functionally, specifically methylates the adenine in position 1618 of 23S rRNA. The protein is Ribosomal RNA large subunit methyltransferase F of Escherichia coli (strain SMS-3-5 / SECEC).